A 1072-amino-acid polypeptide reads, in one-letter code: PWWP domain-containing protein 1 (1072 aa).

Residues 21-133 (DSIQDPKVTP…ADEKELDLGL (113 aa)) are disordered. A compositionally biased stretch (low complexity) spans 25–38 (DPKVTPDDTVVDSS). Residues 66–77 (RVLESERSEKDG) are compositionally biased toward basic and acidic residues. Acidic residues predominate over residues 96–128 (KDDESSEVKEEEEEEDGSDDQSSELGSEADEKE). Residues 173–234 (VGDLVWGKVK…PAELIPFEPN (62 aa)) enclose the PWWP domain. A disordered region spans residues 365–387 (KSPRSSVSTLEPHNRAPPRAPLS). Over residues 366–375 (SPRSSVSTLE) the composition is skewed to polar residues. The short motif at 402–409 (SKKPTKVK) is the Nuclear localization signal 1 element. Disordered stretches follow at residues 486–619 (AIPG…GEAG), 681–738 (LSVS…KTNQ), 871–931 (KAEP…NGNR), and 944–973 (ENSS…SSSV). The segment covering 498–526 (SLDEEKGLAEKSKERMEERAAVLPEHGKS) has biased composition (basic and acidic residues). Polar residues predominate over residues 545-568 (AGSSLQPLLESHTSASEGKSSTGS). Short sequence motifs (nuclear localization signal) lie at residues 596–603 (KKKKKEPD), 705–712 (VKRTEDPS), and 733–740 (LKKTNQLK). Over residues 706–729 (KRTEDPSKAGKKRLSSDRQDEIPS) the composition is skewed to basic and acidic residues. Residues 871–880 (KAEPREPENT) show a composition bias toward basic and acidic residues. The segment covering 897–906 (LHQPTLPPPN) has biased composition (pro residues). The span at 921–930 (SSSSNNGNGN) shows a compositional bias: low complexity. A compositionally biased stretch (polar residues) spans 947–966 (SKANTEPPQVTMTLNRNSGP).

It belongs to the PDP family. As to quaternary structure, interacts with MSI4/FVE. Component of the PRC2 (polycomb repressive complex 2) complex which regulates histone methylation on histone H3K27.

Its subcellular location is the nucleus. Its function is as follows. Together with PDP2, PDP3 and PDP6, interacts with MSI4/FVE and MSI5 to suppress FLC, MAF4 and MAF5 expression by regulating the function of the PRC2 complex and modulating H3K27me3 level, thereby promoting flowering. This chain is PWWP domain-containing protein 1, found in Arabidopsis thaliana (Mouse-ear cress).